Consider the following 85-residue polypeptide: UPF0335 protein BARBAKC583_0130 (85 aa).

It belongs to the UPF0335 family.

In Bartonella bacilliformis (strain ATCC 35685 / KC583 / Herrer 020/F12,63), this protein is UPF0335 protein BARBAKC583_0130.